Consider the following 166-residue polypeptide: NAD(P)H-quinone oxidoreductase subunit I, chloroplastic (166 aa).

2 4Fe-4S ferredoxin-type domains span residues 55–84 (GRIH…VDWK) and 95–124 (LNYS…MTEE). 8 residues coordinate [4Fe-4S] cluster: Cys-64, Cys-67, Cys-70, Cys-74, Cys-104, Cys-107, Cys-110, and Cys-114.

It belongs to the complex I 23 kDa subunit family. NDH is composed of at least 16 different subunits, 5 of which are encoded in the nucleus. The cofactor is [4Fe-4S] cluster.

The protein localises to the plastid. It localises to the chloroplast thylakoid membrane. The enzyme catalyses a plastoquinone + NADH + (n+1) H(+)(in) = a plastoquinol + NAD(+) + n H(+)(out). It catalyses the reaction a plastoquinone + NADPH + (n+1) H(+)(in) = a plastoquinol + NADP(+) + n H(+)(out). Its function is as follows. NDH shuttles electrons from NAD(P)H:plastoquinone, via FMN and iron-sulfur (Fe-S) centers, to quinones in the photosynthetic chain and possibly in a chloroplast respiratory chain. The immediate electron acceptor for the enzyme in this species is believed to be plastoquinone. Couples the redox reaction to proton translocation, and thus conserves the redox energy in a proton gradient. In Perymeniopsis ovalifolia, this protein is NAD(P)H-quinone oxidoreductase subunit I, chloroplastic.